The primary structure comprises 546 residues: Cytochrome P450 monooxygenase gloP (546 aa).

The helical transmembrane segment at 17 to 37 (TLSGGILTFLFIVVIAHFVLT) threads the bilayer. N-linked (GlcNAc...) asparagine glycans are attached at residues N189, N413, and N416. Residue C492 participates in heme binding.

It belongs to the cytochrome P450 family. Heme is required as a cofactor.

The protein localises to the membrane. It participates in mycotoxin biosynthesis. Cytochrome P450 monooxygenase; part of the gene cluster that mediates the biosynthesis of pneumocandins, lipohexapeptides of the echinocandin family that prevent fungal cell wall formation by non-competitive inhibition of beta-1,3-glucan synthase. The 10,12-dimethylmyristoyl side chain is synthesized by the reducing polyketide synthase gloL/GLPKS4. The thioesterase gloN/GLHYD exclusively interacts with gloL/GLPKS4 to maintain turnover of the polyketide side chain. The 10R,12S-dimethylmyristic acid is then transferred to the first thiolation domain of the nonribosomal peptide synthetase gloA/GLNRPS4 by the acyl-AMP ligase gloD/GLligase, followed by its acylation to L-ornithine to trigger elongation of the cyclic hexapeptide. L-ornithine, 4R-hydroxyl-L-proline (generated from L-proline by the dioxygenase gloF/GLOXY2), 3S-hydroxyl-L-homotyrosine (generated by gloG/GLHtyB, gloH/GLHtyA, gloI/GLHtyC, gloJ/GLHtyD and hydroxylated at C-3 by the dioxygenase gloM/GLOXY1), 3R-hydroxyl-L-glutamine (generated from L-glutamine probably by the dioxygenase gloE/GLOXY3) and 3S-hydroxyl-L-proline (generated from L-proline by the dioxygenase gloF/GLOXY2 to yield pneumocandin B0), or 3S-hydroxyl-4S-methyl-L-proline (generated from L-leucine by the dioxygenase gloC/GLOXY4 to yield pneumocandin A0) are sequentially added to the growing chain. The last C domain of gloA/GLNRPS4 is proposed to be responsible for cyclization by condensation to form the peptide bond between L-ornithine and 3S-hydroxyl-4S-methyl-L-proline (for pneumocandin A0) or 3S-hydroxyl-L-proline (for pneumocandin B0). Finally, the subsequent C-4 hydroxylation of 3S-hydroxyl-L-homotyrosine and L-ornithine dihydroxylation at C-4 and C-5 are performed by the cytochrome P450 monooxygenases gloP/GLP450-1 and gloO/GLP450-2, respectively. The polypeptide is Cytochrome P450 monooxygenase gloP (Glarea lozoyensis (strain ATCC 20868 / MF5171)).